A 399-amino-acid polypeptide reads, in one-letter code: Tyrosine--tRNA ligase (399 aa).

The 'HIGH' region motif lies at Pro42 to His51. Residues Lys226–Ser230 carry the 'KMSKS' region motif. Lys229 is an ATP binding site. Residues Leu337 to Leu398 form the S4 RNA-binding domain.

It belongs to the class-I aminoacyl-tRNA synthetase family. TyrS type 2 subfamily. Homodimer.

It localises to the cytoplasm. It carries out the reaction tRNA(Tyr) + L-tyrosine + ATP = L-tyrosyl-tRNA(Tyr) + AMP + diphosphate + H(+). In terms of biological role, catalyzes the attachment of tyrosine to tRNA(Tyr) in a two-step reaction: tyrosine is first activated by ATP to form Tyr-AMP and then transferred to the acceptor end of tRNA(Tyr). The sequence is that of Tyrosine--tRNA ligase from Aromatoleum aromaticum (strain DSM 19018 / LMG 30748 / EbN1) (Azoarcus sp. (strain EbN1)).